The sequence spans 266 residues: Glucosamine-6-phosphate deaminase (266 aa).

Catalysis depends on Asp72, which acts as the Proton acceptor; for enolization step. Asp141 (for ring-opening step) is an active-site residue. Catalysis depends on His143, which acts as the Proton acceptor; for ring-opening step. Catalysis depends on Glu148, which acts as the For ring-opening step.

The protein belongs to the glucosamine/galactosamine-6-phosphate isomerase family. NagB subfamily. As to quaternary structure, homohexamer.

The catalysed reaction is alpha-D-glucosamine 6-phosphate + H2O = beta-D-fructose 6-phosphate + NH4(+). The protein operates within amino-sugar metabolism; N-acetylneuraminate degradation; D-fructose 6-phosphate from N-acetylneuraminate: step 5/5. With respect to regulation, allosterically activated by N-acetylglucosamine 6-phosphate (GlcNAc6P). Its function is as follows. Catalyzes the reversible isomerization-deamination of glucosamine 6-phosphate (GlcN6P) to form fructose 6-phosphate (Fru6P) and ammonium ion. The polypeptide is Glucosamine-6-phosphate deaminase (Pectobacterium atrosepticum (strain SCRI 1043 / ATCC BAA-672) (Erwinia carotovora subsp. atroseptica)).